Reading from the N-terminus, the 409-residue chain is Cobalt-precorrin-5B C(1)-methyltransferase (409 aa).

Belongs to the CbiD family.

It carries out the reaction Co-precorrin-5B + S-adenosyl-L-methionine = Co-precorrin-6A + S-adenosyl-L-homocysteine. It participates in cofactor biosynthesis; adenosylcobalamin biosynthesis; cob(II)yrinate a,c-diamide from sirohydrochlorin (anaerobic route): step 6/10. Catalyzes the methylation of C-1 in cobalt-precorrin-5B to form cobalt-precorrin-6A. The protein is Cobalt-precorrin-5B C(1)-methyltransferase of Methanopyrus kandleri (strain AV19 / DSM 6324 / JCM 9639 / NBRC 100938).